The sequence spans 250 residues: Proteasome subunit alpha (250 aa).

This sequence belongs to the peptidase T1A family. The 20S proteasome core is composed of 14 alpha and 14 beta subunits that assemble into four stacked heptameric rings, resulting in a barrel-shaped structure. The two inner rings, each composed of seven catalytic beta subunits, are sandwiched by two outer rings, each composed of seven alpha subunits. The catalytic chamber with the active sites is on the inside of the barrel. Has a gated structure, the ends of the cylinder being occluded by the N-termini of the alpha-subunits. Is capped at one or both ends by the proteasome regulatory ATPase, PAN.

The protein resides in the cytoplasm. The formation of the proteasomal ATPase PAN-20S proteasome complex, via the docking of the C-termini of PAN into the intersubunit pockets in the alpha-rings, triggers opening of the gate for substrate entry. Interconversion between the open-gate and close-gate conformations leads to a dynamic regulation of the 20S proteasome proteolysis activity. Functionally, component of the proteasome core, a large protease complex with broad specificity involved in protein degradation. In Methanobrevibacter smithii (strain ATCC 35061 / DSM 861 / OCM 144 / PS), this protein is Proteasome subunit alpha.